Here is a 990-residue protein sequence, read N- to C-terminus: Bifunctional glutamine synthetase adenylyltransferase/adenylyl-removing enzyme (990 aa).

An adenylyl removase region spans residues 1–474 (MIFSAITADL…HYAKLFEGDP (474 aa)). Residues 478–990 (AKLPPVDYGA…FSRLIGGEDA (513 aa)) are adenylyl transferase.

Belongs to the GlnE family. Requires Mg(2+) as cofactor.

The enzyme catalyses [glutamine synthetase]-O(4)-(5'-adenylyl)-L-tyrosine + phosphate = [glutamine synthetase]-L-tyrosine + ADP. It catalyses the reaction [glutamine synthetase]-L-tyrosine + ATP = [glutamine synthetase]-O(4)-(5'-adenylyl)-L-tyrosine + diphosphate. Involved in the regulation of glutamine synthetase GlnA, a key enzyme in the process to assimilate ammonia. When cellular nitrogen levels are high, the C-terminal adenylyl transferase (AT) inactivates GlnA by covalent transfer of an adenylyl group from ATP to specific tyrosine residue of GlnA, thus reducing its activity. Conversely, when nitrogen levels are low, the N-terminal adenylyl removase (AR) activates GlnA by removing the adenylyl group by phosphorolysis, increasing its activity. The regulatory region of GlnE binds the signal transduction protein PII (GlnB) which indicates the nitrogen status of the cell. The polypeptide is Bifunctional glutamine synthetase adenylyltransferase/adenylyl-removing enzyme (Rhodopseudomonas palustris (strain ATCC BAA-98 / CGA009)).